We begin with the raw amino-acid sequence, 146 residues long: Hemoglobin subunit beta-1 (146 aa).

One can recognise a Globin domain in the interval histidine 2–histidine 146. Heme b is bound by residues histidine 63 and histidine 92.

It belongs to the globin family. Heterotetramer of two alpha chains and two beta chains. Red blood cells.

In terms of biological role, involved in oxygen transport from the lung to the various peripheral tissues. In Iguana iguana (Common iguana), this protein is Hemoglobin subunit beta-1 (HBB1).